Reading from the N-terminus, the 192-residue chain is MATTNCLLALAIAGLVLVSLPGLSRGDVDARRGRELAGGCNPSGTLRPSRSHSCQDCCKAGRSYPTYACSPATTGSTKAVMTLNDFEAGGDGGDPSECDGKFHKNTERVVALSTGWYANGRRCNKNIRINANGRSVLAKVVDECDSLHGCDKEHAYQPPCRPNVVDASQAVWDALRITGEDVGEYDITWSDA.

Residues 1–26 (MATTNCLLALAIAGLVLVSLPGLSRG) form the signal peptide.

Belongs to the kiwellin family.

It localises to the secreted. This is Putative ripening-related protein 2 from Oryza sativa subsp. japonica (Rice).